Consider the following 305-residue polypeptide: Glycine--tRNA ligase alpha subunit (305 aa).

It belongs to the class-II aminoacyl-tRNA synthetase family. Tetramer of two alpha and two beta subunits.

The protein localises to the cytoplasm. The enzyme catalyses tRNA(Gly) + glycine + ATP = glycyl-tRNA(Gly) + AMP + diphosphate. This is Glycine--tRNA ligase alpha subunit from Streptococcus thermophilus (strain CNRZ 1066).